Here is a 604-residue protein sequence, read N- to C-terminus: Kelch-like protein 15 (604 aa).

The BTB domain maps to Leu31 to Met98. The BACK domain occupies Cys133–Lys237. Kelch repeat units follow at residues Phe328–Lys379, Ile381–Asn426, Leu428–Lys473, Lys489–Lys542, and Ile544–Leu590.

In terms of assembly, homodimer. Dimerization does not affect PPP2R5B-binding, but is required for its proteasomal degradation. Interacts with CUL3. Directly interacts with PPP2R5B; this interaction leads to PPP2R5B proteasomal degradation. Interacts with RBBP8/CtIP; this interaction leads to RBBP8 proteasomal degradation. Interacts with PACMP micropeptide; interaction prevents ubiquitination and degradation of RBBP8/CtIP.

Its subcellular location is the nucleus. It participates in protein modification; protein ubiquitination. Its function is as follows. Substrate-specific adapter for CUL3 E3 ubiquitin-protein ligase complex. Acts as an adapter for CUL3 to target the serine/threonine-protein phosphatase 2A (PP2A) subunit PPP2R5B for ubiquitination and subsequent proteasomal degradation, thus promoting exchange with other regulatory subunits and regulating PP2A holoenzyme composition. Acts as an adapter for CUL3 to target the DNA-end resection factor RBBP8/CtIP for ubiquitination and subsequent proteasomal degradation. Through the regulation of RBBP8/CtIP protein turnover, plays a key role in DNA damage response, favoring DNA double-strand repair through error-prone non-homologous end joining (NHEJ) over error-free, RBBP8-mediated homologous recombination (HR). This chain is Kelch-like protein 15 (Klhl15), found in Mus musculus (Mouse).